The sequence spans 146 residues: MKIESPVFGSAEVSDDKVIEFPAGLPGFEHCKRFVLVHEEGSDTAVFLLQSVDDADVAFSITGPEQLGINYEFALSDEEVATLGLASPAEALVAVIVRKDGEAGSPASTGLRANFMAPLVINVEGRRGLQKVINRLGCDIVLRERA.

This sequence belongs to the FliW family. Interacts with translational regulator CsrA and flagellin(s).

The protein localises to the cytoplasm. In terms of biological role, acts as an anti-CsrA protein, binds CsrA and prevents it from repressing translation of its target genes, one of which is flagellin. Binds to flagellin and participates in the assembly of the flagellum. The sequence is that of Flagellar assembly factor FliW from Azoarcus sp. (strain BH72).